A 602-amino-acid polypeptide reads, in one-letter code: Aspartate--tRNA(Asp/Asn) ligase (602 aa).

Glutamate 175 serves as a coordination point for L-aspartate. The segment at 199–202 (QIFK) is aspartate. Arginine 221 provides a ligand contact to L-aspartate. Residues 221–223 (RDE) and glutamine 230 contribute to the ATP site. Histidine 458 is a binding site for L-aspartate. Glutamate 492 lines the ATP pocket. Residue arginine 499 coordinates L-aspartate. 544–547 (GLDR) is a binding site for ATP.

Belongs to the class-II aminoacyl-tRNA synthetase family. Type 1 subfamily. In terms of assembly, homodimer.

It is found in the cytoplasm. It catalyses the reaction tRNA(Asx) + L-aspartate + ATP = L-aspartyl-tRNA(Asx) + AMP + diphosphate. Its function is as follows. Aspartyl-tRNA synthetase with relaxed tRNA specificity since it is able to aspartylate not only its cognate tRNA(Asp) but also tRNA(Asn). Reaction proceeds in two steps: L-aspartate is first activated by ATP to form Asp-AMP and then transferred to the acceptor end of tRNA(Asp/Asn). This is Aspartate--tRNA(Asp/Asn) ligase from Cupriavidus metallidurans (strain ATCC 43123 / DSM 2839 / NBRC 102507 / CH34) (Ralstonia metallidurans).